Consider the following 361-residue polypeptide: Aminomethyltransferase (361 aa).

The protein belongs to the GcvT family. In terms of assembly, the glycine cleavage system is composed of four proteins: P, T, L and H.

It carries out the reaction N(6)-[(R)-S(8)-aminomethyldihydrolipoyl]-L-lysyl-[protein] + (6S)-5,6,7,8-tetrahydrofolate = N(6)-[(R)-dihydrolipoyl]-L-lysyl-[protein] + (6R)-5,10-methylene-5,6,7,8-tetrahydrofolate + NH4(+). The glycine cleavage system catalyzes the degradation of glycine. In Bacteroides thetaiotaomicron (strain ATCC 29148 / DSM 2079 / JCM 5827 / CCUG 10774 / NCTC 10582 / VPI-5482 / E50), this protein is Aminomethyltransferase.